The primary structure comprises 84 residues: Small ribosomal subunit protein uS17 (84 aa).

Belongs to the universal ribosomal protein uS17 family. As to quaternary structure, part of the 30S ribosomal subunit.

Functionally, one of the primary rRNA binding proteins, it binds specifically to the 5'-end of 16S ribosomal RNA. The protein is Small ribosomal subunit protein uS17 of Alkaliphilus metalliredigens (strain QYMF).